Reading from the N-terminus, the 797-residue chain is Outer membrane protein assembly factor BamA (797 aa).

The first 19 residues, 1–19 (MKKLLIASLLFGTTTTVFA), serve as a signal peptide directing secretion. 5 consecutive POTRA domains span residues 22–89 (FVAK…VVAK), 90–170 (SIIS…INED), 173–259 (AKLA…VNEG), 262–341 (YDLR…VDAG), and 344–418 (LTVR…VKER).

The protein belongs to the BamA family. As to quaternary structure, part of the Bam complex.

It localises to the cell outer membrane. Functionally, part of the outer membrane protein assembly complex, which is involved in assembly and insertion of beta-barrel proteins into the outer membrane. This is Outer membrane protein assembly factor BamA from Haemophilus influenzae.